Here is a 249-residue protein sequence, read N- to C-terminus: Vesicle-associated membrane protein-associated protein A (249 aa).

Alanine 2 carries the post-translational modification N-acetylalanine. Residues 2-227 (ASASGAMAKH…VSFRDNVTSP (226 aa)) lie on the Cytoplasmic side of the membrane. An MSP domain is found at 14–131 (ILVLDPPSDL…MDSKLRCVFE (118 aa)). The segment at 50–53 (KVKT) is phosphorylated FFAT motif binding. At lysine 125 the chain carries N6-acetyllysine. The segment covering 135–144 (ENDKLNDMEP) has biased composition (basic and acidic residues). The disordered stretch occupies residues 135-166 (ENDKLNDMEPSKAVPLNASKQDGPLPKPHSVS). Serine 166 is modified (phosphoserine). A coiled-coil region spans residues 168–207 (NDTETRKLMEECKRLQGEMMKLSEENRHLRDEGLRLRKVA). Threonine 170 is modified (phosphothreonine). 3 positions are modified to phosphoserine: serine 214, serine 216, and serine 219. Residues 228–248 (LPSLLVVIAAIFIGFFLGKFI) form a helical; Anchor for type IV membrane protein membrane-spanning segment.

This sequence belongs to the VAMP-associated protein (VAP) (TC 9.B.17) family. Homodimer; disulfide-linked. Heterodimer with VAPB. Interacts with VAMP1, VAMP2, STX1A, BET1, SEC22C and with the C-terminal domain of OCLN. Interacts (via MSP domain) with OSBPL1A (via FFAT motif). Interacts (via MSP domain) with ZFYVE27; may retain ZFYVE27 in the endoplasmic reticulum and regulate its function in cell projections formation. Interacts with OSBP. Interacts (via C-terminus) with RSAD2/viperin (via C-terminus). Interacts with IFITM3. Interacts with OSBPL3 (phosphorylated form). Interacts with KIF5A in a ZFYVE27-dependent manner. Interacts (via MSP domain) with STARD3 (via phosphorylated FFAT motif); this interaction recruits VAPA to the endosome. Interacts with STARD3NL (via FFAT motif). Interacts with CERT1. Interacts with PLEKHA3 and SACM1L to form a ternary complex. Interacts with VPS13A (via FFAT motif). Interacts with RB1CC1 (via phosphorylated FFAT motif), MIGA2 (via phosphorylated FFAT motif), RMDN3 (via phosphorylated FFAT motif), KCNB1 (via phosphorylated FFAT motif) and KCNB2 (via phosphorylated FFAT motif). Interacts (via MSP domain) with WDR44; the interactions connect the endoplasmic reticulum (ER) with the endosomal tubule. Ubiquitous.

Its subcellular location is the endoplasmic reticulum membrane. The protein resides in the cell membrane. The protein localises to the cell junction. It localises to the tight junction. It is found in the nucleus membrane. Its function is as follows. Endoplasmic reticulum (ER)-anchored protein that mediates the formation of contact sites between the ER and endosomes via interaction with FFAT motif-containing proteins such as STARD3 or WDR44. STARD3-VAPA interaction enables cholesterol transfer from the ER to endosomes. Via interaction with WDR44 participates in neosynthesized protein export. In addition, recruited to the plasma membrane through OSBPL3 binding. The OSBPL3-VAPA complex stimulates RRAS signaling which in turn attenuates integrin beta-1 (ITGB1) activation at the cell surface. With OSBPL3, may regulate ER morphology. May play a role in vesicle trafficking. The chain is Vesicle-associated membrane protein-associated protein A from Rattus norvegicus (Rat).